Reading from the N-terminus, the 559-residue chain is MGDVKESKMQITPETPGRIPVLNPFESPSDYSNLHEQTLASPSVFKSTKLPTPGKFRWSIDQLAVINPVEIDPEDIHRQALYLSHSRIDKDVEDKRQKAIEEFFTKDVIVPSPWTDHEGKQLSQCHSSKCTNINSDSPVGKKLTIHSEKSDAACQTLLSLPVDFNLENILGDYFRADEFADQSPGNLSSSSLRRKLFLDGNGSISDSLPSASPGSPHSGVQTSLEMFYSIDLSPVKCRSPLQTPSSGQFSSSPIQASAKKYSLGSITSPSPISSPTFSPIEFQIGETPLSEQRKFTVHSPDASSGTNSNGITNPCIRSPYIDGCSPIKNWSPMRLQMYSGGTQYRTSVIQIPFTLETQGEDEEDKENIPSTDVSSPAMDAAGIHLRQFSNEASTHGTHLVVTAMSVTQNQSSASEKELALLQDVEREKDNNTVDMVDPIEIADETTWIKEPVDNGSLPMTDFVSGIAFSIENSHMCMSPLAESSVIPCESSNIQMDSGYNTQNCGSNIMDTVGAESYCKESDAQTCEVESKSQAFNMKQDHTTQRCWMKTASPFQCSSP.

Residues 1–27 are disordered; sequence MGDVKESKMQITPETPGRIPVLNPFES. A phosphoserine mark is found at S183, S191, S270, S325, and S331. T354 carries the phosphothreonine modification.

It belongs to the BORA family. As to quaternary structure, interacts with AURKA. Post-translationally, phosphorylated by AURKA.

Its function is as follows. Required for the activation of AURKA at the onset of mitosis. The polypeptide is Protein aurora borealis (BORA) (Homo sapiens (Human)).